The primary structure comprises 215 residues: Probable phosphoglycerate mutase GpmB (215 aa).

Substrate is bound by residues 8 to 15 (RHGETQWN), 21 to 22 (QG), Arg58, Lys60, 82 to 85 (ELDM), 104 to 105 (RR), and 151 to 152 (GI). Catalysis depends on His9, which acts as the Tele-phosphohistidine intermediate. Glu82 functions as the Proton donor/acceptor in the catalytic mechanism.

Belongs to the phosphoglycerate mutase family. GpmB subfamily.

The catalysed reaction is (2R)-2-phosphoglycerate = (2R)-3-phosphoglycerate. It participates in carbohydrate degradation; glycolysis; pyruvate from D-glyceraldehyde 3-phosphate: step 3/5. The protein is Probable phosphoglycerate mutase GpmB of Salmonella paratyphi A (strain AKU_12601).